Reading from the N-terminus, the 360-residue chain is Phospho-N-acetylmuramoyl-pentapeptide-transferase (360 aa).

10 helical membrane passes run 21 to 41 (YITV…LWIG), 73 to 93 (TMGG…WANL), 94 to 114 (ANPY…IGFV), 132 to 152 (WKYF…YAIG), 168 to 188 (IMPQ…VGTS), 199 to 219 (GLAI…AWAT), 235 to 255 (FSAE…GFLW), 263 to 283 (VFMG…VAVL), 288 to 308 (FLLV…ILQV), and 338 to 358 (VIVR…VTLK).

The protein belongs to the glycosyltransferase 4 family. MraY subfamily. Mg(2+) is required as a cofactor.

The protein resides in the cell inner membrane. The enzyme catalyses UDP-N-acetyl-alpha-D-muramoyl-L-alanyl-gamma-D-glutamyl-meso-2,6-diaminopimeloyl-D-alanyl-D-alanine + di-trans,octa-cis-undecaprenyl phosphate = di-trans,octa-cis-undecaprenyl diphospho-N-acetyl-alpha-D-muramoyl-L-alanyl-D-glutamyl-meso-2,6-diaminopimeloyl-D-alanyl-D-alanine + UMP. The protein operates within cell wall biogenesis; peptidoglycan biosynthesis. In terms of biological role, catalyzes the initial step of the lipid cycle reactions in the biosynthesis of the cell wall peptidoglycan: transfers peptidoglycan precursor phospho-MurNAc-pentapeptide from UDP-MurNAc-pentapeptide onto the lipid carrier undecaprenyl phosphate, yielding undecaprenyl-pyrophosphoryl-MurNAc-pentapeptide, known as lipid I. The protein is Phospho-N-acetylmuramoyl-pentapeptide-transferase of Pasteurella multocida (strain Pm70).